The primary structure comprises 273 residues: Salivary glue protein Sgs-3 (273 aa).

Positions 1-23 (MKLTIAISLASILLLSVAHVAQG) are cleaved as a signal peptide. Over residues 47–57 (TTTTTTTTCAP) the composition is skewed to low complexity. Residues 47–225 (TTTTTTTTCA…TPKPTNKPGC (179 aa)) are disordered. Pro residues predominate over residues 58 to 67 (PTRPPPPPCT). Residues 83 to 225 (RRTTTTTRQT…TPKPTNKPGC (143 aa)) show a composition bias toward low complexity.

This Drosophila yakuba (Fruit fly) protein is Salivary glue protein Sgs-3 (Sgs3).